Reading from the N-terminus, the 364-residue chain is UDP-N-acetylglucosamine--N-acetylmuramyl-(pentapeptide) pyrophosphoryl-undecaprenol N-acetylglucosamine transferase (364 aa).

UDP-N-acetyl-alpha-D-glucosamine contacts are provided by residues 10–12 (TGG), asparagine 123, serine 198, isoleucine 251, and glutamine 296.

The protein belongs to the glycosyltransferase 28 family. MurG subfamily.

Its subcellular location is the cell membrane. It catalyses the reaction di-trans,octa-cis-undecaprenyl diphospho-N-acetyl-alpha-D-muramoyl-L-alanyl-D-glutamyl-meso-2,6-diaminopimeloyl-D-alanyl-D-alanine + UDP-N-acetyl-alpha-D-glucosamine = di-trans,octa-cis-undecaprenyl diphospho-[N-acetyl-alpha-D-glucosaminyl-(1-&gt;4)]-N-acetyl-alpha-D-muramoyl-L-alanyl-D-glutamyl-meso-2,6-diaminopimeloyl-D-alanyl-D-alanine + UDP + H(+). The protein operates within cell wall biogenesis; peptidoglycan biosynthesis. Its function is as follows. Cell wall formation. Catalyzes the transfer of a GlcNAc subunit on undecaprenyl-pyrophosphoryl-MurNAc-pentapeptide (lipid intermediate I) to form undecaprenyl-pyrophosphoryl-MurNAc-(pentapeptide)GlcNAc (lipid intermediate II). The polypeptide is UDP-N-acetylglucosamine--N-acetylmuramyl-(pentapeptide) pyrophosphoryl-undecaprenol N-acetylglucosamine transferase (Exiguobacterium sibiricum (strain DSM 17290 / CCUG 55495 / CIP 109462 / JCM 13490 / 255-15)).